The primary structure comprises 156 residues: Ribosomal RNA large subunit methyltransferase H (156 aa).

S-adenosyl-L-methionine-binding positions include Leu73, Gly104, and 123–128; that span reads LSDLTL.

It belongs to the RNA methyltransferase RlmH family. As to quaternary structure, homodimer.

Its subcellular location is the cytoplasm. It carries out the reaction pseudouridine(1915) in 23S rRNA + S-adenosyl-L-methionine = N(3)-methylpseudouridine(1915) in 23S rRNA + S-adenosyl-L-homocysteine + H(+). In terms of biological role, specifically methylates the pseudouridine at position 1915 (m3Psi1915) in 23S rRNA. In Methylibium petroleiphilum (strain ATCC BAA-1232 / LMG 22953 / PM1), this protein is Ribosomal RNA large subunit methyltransferase H.